Here is a 391-residue protein sequence, read N- to C-terminus: 3-ketoacyl-CoA thiolase (391 aa).

Cys95 (acyl-thioester intermediate) is an active-site residue. Catalysis depends on proton acceptor residues His347 and Cys377.

Belongs to the thiolase-like superfamily. Thiolase family. In terms of assembly, heterotetramer of two alpha chains (FadB) and two beta chains (FadA).

It localises to the cytoplasm. The enzyme catalyses an acyl-CoA + acetyl-CoA = a 3-oxoacyl-CoA + CoA. It participates in lipid metabolism; fatty acid beta-oxidation. Catalyzes the final step of fatty acid oxidation in which acetyl-CoA is released and the CoA ester of a fatty acid two carbons shorter is formed. This is 3-ketoacyl-CoA thiolase from Pseudomonas fluorescens (strain Pf0-1).